The primary structure comprises 348 residues: Tripartite motif-containing protein 16-like protein (348 aa).

In terms of domain architecture, B30.2/SPRY spans 139 to 337 (YWTSKPEPST…RIVDLGEEPE (199 aa)).

Belongs to the TRIM/RBCC family.

The protein localises to the cytoplasm. The protein is Tripartite motif-containing protein 16-like protein (TRIM16L) of Homo sapiens (Human).